The following is a 240-amino-acid chain: 4-hydroxy-tetrahydrodipicolinate reductase (240 aa).

Residues 8–13 (GSTGKM), 78–80 (GTT), and 102–105 (SANM) contribute to the NAD(+) site. Catalysis depends on His134, which acts as the Proton donor/acceptor. His135 contacts (S)-2,3,4,5-tetrahydrodipicolinate. Residue Lys138 is the Proton donor of the active site. (S)-2,3,4,5-tetrahydrodipicolinate is bound at residue 144 to 145 (GT).

It belongs to the DapB family.

The protein resides in the cytoplasm. It carries out the reaction (S)-2,3,4,5-tetrahydrodipicolinate + NAD(+) + H2O = (2S,4S)-4-hydroxy-2,3,4,5-tetrahydrodipicolinate + NADH + H(+). The catalysed reaction is (S)-2,3,4,5-tetrahydrodipicolinate + NADP(+) + H2O = (2S,4S)-4-hydroxy-2,3,4,5-tetrahydrodipicolinate + NADPH + H(+). Its pathway is amino-acid biosynthesis; L-lysine biosynthesis via DAP pathway; (S)-tetrahydrodipicolinate from L-aspartate: step 4/4. In terms of biological role, catalyzes the conversion of 4-hydroxy-tetrahydrodipicolinate (HTPA) to tetrahydrodipicolinate. This is 4-hydroxy-tetrahydrodipicolinate reductase from Rickettsia canadensis (strain McKiel).